A 316-amino-acid chain; its full sequence is GTP cyclohydrolase FolE2 2 (316 aa).

It belongs to the GTP cyclohydrolase IV family.

It catalyses the reaction GTP + H2O = 7,8-dihydroneopterin 3'-triphosphate + formate + H(+). Its pathway is cofactor biosynthesis; 7,8-dihydroneopterin triphosphate biosynthesis; 7,8-dihydroneopterin triphosphate from GTP: step 1/1. In terms of biological role, converts GTP to 7,8-dihydroneopterin triphosphate. This is GTP cyclohydrolase FolE2 2 from Burkholderia orbicola (strain MC0-3).